We begin with the raw amino-acid sequence, 84 residues long: Elongation factor 1-beta (84 aa).

It belongs to the EF-1-beta/EF-1-delta family.

Promotes the exchange of GDP for GTP in EF-1-alpha/GDP, thus allowing the regeneration of EF-1-alpha/GTP that could then be used to form the ternary complex EF-1-alpha/GTP/AAtRNA. This is Elongation factor 1-beta from Methanoculleus marisnigri (strain ATCC 35101 / DSM 1498 / JR1).